Here is a 560-residue protein sequence, read N- to C-terminus: MAGPTEAETGLAEPRALCAQRGHRTYARRWVFLLAISLLNCSNATLWLSFAPVADVIAEDLVLSMEQINWLSLVYLVVSTPFGVAAIWILDSVGLRAATILGAWLNFAGSVLRMVPCMVVGTQNPFAFLMGGQSLCALAQSLVIFSPAKLAALWFPEHQRATANMLATMSNPLGVLVANVLSPVLVKKGEDIPLMLGVYTIPAGVVCLLSTICLWESVPPTPPSAGAASSTSEKFLDGLKLQLMWNKAYVILAVCLGGMIGISASFSALLEQILCASGHSSGFSGLCGALFITFGILGALALGPYVDRTKHFTEATKIGLCLFSLACVPFALVSQLQGQTLALAATCSLLGLFGFSVGPVAMELAVECSFPVGEGAATGMIFVLGQAEGILIMLAMTALTVRRSEPSLSTCQQGEDPLDWTVSLLLMAGLCTFFSCILAVFFHTPYRRLQAESGEPPSTRNAVGGADSGPGVDRGGAGRAGVLGPSTATPECTARGASLEDPRGPGSPHPACHRATPRAQGPAATDAPSRPGRLAGRVQASRFIDPAGSHSSFSSPWVIT.

A run of 12 helical transmembrane segments spans residues Trp-30–Phe-50, Trp-70–Leu-90, Ile-100–Val-120, Pro-125–Phe-145, Leu-166–Val-186, Ile-192–Ile-212, Val-250–Leu-270, Gly-282–Leu-302, Ile-318–Gly-338, Leu-341–Ala-361, Gly-379–Leu-399, and Val-422–Phe-442. Residues Ala-451 to Ala-540 are disordered. Residues Ala-466–Gly-481 show a composition bias toward gly residues.

Belongs to the major facilitator superfamily.

The protein resides in the membrane. The chain is Solute carrier family 49 member A3 from Homo sapiens (Human).